We begin with the raw amino-acid sequence, 262 residues long: NADP-dependent mannitol dehydrogenase (262 aa).

Positions 23, 69, 96, and 129 each coordinate NADP(+). Ser-149 acts as the Proton donor in catalysis. NADP(+) contacts are provided by Tyr-169, Lys-173, Val-202, Thr-204, and Gln-206. The Proton acceptor role is filled by Tyr-169. The active-site Lowers pKa of active site Tyr is Lys-173.

Belongs to the short-chain dehydrogenases/reductases (SDR) family. Homotetramer.

The enzyme catalyses D-mannitol + NADP(+) = D-fructose + NADPH + H(+). The polypeptide is NADP-dependent mannitol dehydrogenase (mtdH) (Agaricus bisporus (White button mushroom)).